We begin with the raw amino-acid sequence, 669 residues long: GTP-binding protein 1 (669 aa).

Residues 1–32 (MAAERSRSPVDSPVPASMFAPEPSSPGAARAA) form a disordered region. Phosphoserine occurs at positions 6, 8, 12, 24, 25, 44, 47, and 69. Residues 158 to 389 (FLEVRVAVVG…LNLLSPRTSY (232 aa)) enclose the tr-type G domain. The segment at 167-174 (GNVDAGKS) is G1. Residue 167–174 (GNVDAGKS) coordinates GTP. A G2 region spans residues 206 to 210 (GRTSS). The tract at residues 252–255 (DLAG) is G3. Residues 252–256 (DLAGH) and 308–311 (TKID) each bind GTP. Residues 308 to 311 (TKID) are G4. The G5 stretch occupies residues 366–368 (SNV). 2 stretches are compositionally biased toward polar residues: residues 573–595 (LLQT…QSTK) and 620–637 (DEAS…SGLQ). The tract at residues 573-669 (LLQTTNNSPM…GACVTPASGC (97 aa)) is disordered. The residue at position 580 (S580) is a Phosphoserine. Residues 646–657 (GRRRGGQRHKVK) are compositionally biased toward basic residues.

The protein belongs to the TRAFAC class translation factor GTPase superfamily. Classic translation factor GTPase family. GTPBP1 subfamily. In terms of assembly, interacts with EXOSC2/RRP4, EXOSC3/RRP40, EXOSC5/RRP46, HNRNPD, HNRNPR and SYNCRIP. Identified in a complex with HNRNPD, HNRNPL, HNRNPQ, HNRNPR, HNRNPU and AANAT mRNA, but does not bind mRNA by itself. In terms of tissue distribution, detected in pineal gland (at protein level).

Its subcellular location is the cytoplasm. In terms of biological role, promotes degradation of target mRNA species. Plays a role in the regulation of circadian mRNA stability. Binds GTP and has GTPase activity. The protein is GTP-binding protein 1 (Gtpbp1) of Rattus norvegicus (Rat).